Consider the following 437-residue polypeptide: Anhydromevalonate phosphate decarboxylase (437 aa).

Positions 136 and 199 each coordinate Mn(2+). D247 functions as the Proton acceptor in the catalytic mechanism.

It belongs to the UbiD family. Prenylated FMN serves as cofactor. Mn(2+) is required as a cofactor.

The catalysed reaction is (2E)-3-methyl-5-phosphooxypent-2-enoate + H(+) = isopentenyl phosphate + CO2. It participates in isoprenoid biosynthesis; isopentenyl diphosphate biosynthesis via mevalonate pathway. Functionally, catalyzes the conversion of trans-anhydromevalonate 5-phosphate (tAHMP) into isopentenyl phosphate. Involved in the archaeal mevalonate (MVA) pathway, which provides fundamental precursors for isoprenoid biosynthesis, such as isopentenyl diphosphate (IPP) and dimethylallyl diphosphate (DMAPP). This chain is Anhydromevalonate phosphate decarboxylase, found in Aeropyrum pernix (strain ATCC 700893 / DSM 11879 / JCM 9820 / NBRC 100138 / K1).